A 382-amino-acid chain; its full sequence is UBP1-associated proteins 1B (382 aa).

Residues 1-99 (MAKEGEERKK…SDESEEIVDS (99 aa)) form a disordered region. The span at 10-22 (KEKKEKKERKERK) shows a compositional bias: basic residues. Positions 23–34 (RREAEELAVREK) are enriched in basic and acidic residues. Residues 163–248 (RNIFVRGLGW…RPFNSGKPRE (86 aa)) enclose the RRM domain.

It localises to the nucleus. Its function is as follows. Acts as a component of a complex regulating the turnover of mRNAs in the nucleus. Binds with high affinity to RNA molecules that contain U-rich sequences in 3'-UTRs. May function in complex with UBP1 and contribute to the stabilization of mRNAs in the nucleus. In Arabidopsis thaliana (Mouse-ear cress), this protein is UBP1-associated proteins 1B (UBA1B).